Consider the following 402-residue polypeptide: Cholinephosphotransferase 1 (402 aa).

Topologically, residues 1–62 (MGLAEGLAAR…LVEKVPLWLA (62 aa)) are cytoplasmic. A helical transmembrane segment spans residues 63 to 83 (PNTITMVGLLLNVLSTLILVC). CDP-choline is bound at residue Asn64. The Lumenal portion of the chain corresponds to 84–93 (YCPTATEGAP). A helical membrane pass occupies residues 94–118 (FWTYLLCAIGLFVYQSLDAIDGKQA). 2 residues coordinate Mg(2+): Asp111 and Asp114. CDP-choline is bound at residue Arg119. At 119–125 (RRTNSSS) the chain is on the cytoplasmic side. The chain crosses the membrane as a helical span at residues 126–150 (PLGEMFDHGCDSISIVFVNLGTIAA). Residue Asp132 participates in Mg(2+) binding. Catalysis depends on His133, which acts as the Proton acceptor. Asp136 lines the Mg(2+) pocket. Residues 151 to 160 (VRLGTLPGWM) lie on the Lumenal side of the membrane. A helical membrane pass occupies residues 161 to 179 (FYCCFVGMFMFYCAQWQTY). Topologically, residues 180 to 190 (VCGTLKFGIID) are cytoplasmic. A helical membrane pass occupies residues 191-207 (VTELQISVTVMFLMTAV). Topologically, residues 208 to 222 (CGPELWDYEIPFTGL) are lumenal. Residues 223 to 248 (PMKTIPLLGIIGGTVYSCSNYFRVIL) form a helical membrane-spanning segment. At 249–265 (SGGVGKNGSTVAGTSVL) the chain is on the cytoplasmic side. Residues 266-281 (SPGLHIGLVLLLALMI) form a helical membrane-spanning segment. At 282-293 (YKKSTTNLFLQN) the chain is on the lumenal side. A helical transmembrane segment spans residues 294–316 (PCLYTLAFGFVSAKITIKLVIAH). At 317–329 (MTKSEISLQDTAF) the chain is on the cytoplasmic side. The chain crosses the membrane as a helical span at residues 330 to 339 (IGPGLLFFNQ). The Lumenal portion of the chain corresponds to 340–346 (YFNSFID). A helical membrane pass occupies residues 347–376 (EYIVLWIAMVISFADLLRYCISVCLQIATH). At 377-402 (LRISVFRISSNQAAEQVQTQKQKLTD) the chain is on the cytoplasmic side.

The protein belongs to the CDP-alcohol phosphatidyltransferase class-I family. As to quaternary structure, homodimer. It depends on Mg(2+) as a cofactor. The cofactor is Mn(2+).

It localises to the golgi apparatus membrane. It catalyses the reaction CDP-choline + a 1,2-diacyl-sn-glycerol = a 1,2-diacyl-sn-glycero-3-phosphocholine + CMP + H(+). The enzyme catalyses 1,2-dioctanoyl-sn-glycerol + CDP-choline = 1,2-dioctanoyl-sn-glycero-3-phosphocholine + CMP + H(+). The catalysed reaction is 1-octadecanoyl-2-(5Z,8Z,11Z,14Z-eicosatetraenoyl)-sn-glycerol + CDP-choline = 1-octadecanoyl-2-(5Z,8Z,11Z,14Z-eicosatetraenoyl)-sn-glycero-3-phosphocholine + CMP + H(+). It carries out the reaction 1-hexadecanoyl-2-(9Z-octadecenoyl)-sn-glycerol + CDP-choline = 1-hexadecanoyl-2-(9Z-octadecenoyl)-sn-glycero-3-phosphocholine + CMP + H(+). It catalyses the reaction 1-hexadecanoyl-2-(4Z,7Z,10Z,13Z,16Z,19Z-docosahexaenoyl)-sn-glycerol + CDP-choline = 1-hexadecanoyl-2-(4Z,7Z,10Z,13Z,16Z,19Z-docosahexaenoyl)-sn-glycero-3-phosphocholine + CMP + H(+). It participates in phospholipid metabolism; phosphatidylcholine biosynthesis; phosphatidylcholine from phosphocholine: step 2/2. Functionally, catalyzes the final step of de novo phosphatidylcholine (PC) synthesis, i.e. the transfer of choline phosphate from CDP-choline to the free hydroxyl of a diacylglycerol (DAG), producing a PC. It thereby plays a central role in the formation and maintenance of vesicular membranes. Shows a high preference for CDP-choline over CDP-ethanolamine as substrate. This is Cholinephosphotransferase 1 (chpt1) from Xenopus laevis (African clawed frog).